The sequence spans 348 residues: Killer cell immunoglobulin-like receptor 2DL1 (348 aa).

The N-terminal stretch at 1-21 (MSLLVVSMACVGFFLLQGAWP) is a signal peptide. Over 22 to 245 (HEGVHRKPSL…SKTGNPRHLH (224 aa)) the chain is Extracellular. Ig-like C2-type domains are found at residues 42-107 (EETV…VTHS) and 142-205 (GENV…FHDS). Residues cysteine 49 and cysteine 100 are joined by a disulfide bond. N-linked (GlcNAc...) asparagine glycosylation is found at asparagine 67, asparagine 84, asparagine 144, and asparagine 178. A disulfide bond links cysteine 149 and cysteine 198. The disordered stretch occupies residues 220-239 (VTGNPSNSWPSPTEPSSKTG). The chain crosses the membrane as a helical span at residues 246–264 (ILIGTSVVIILFILLFFLL). The Cytoplasmic portion of the chain corresponds to 265–348 (HRWCSNKKNA…ESRSKVVSCP (84 aa)).

Belongs to the immunoglobulin superfamily. In terms of assembly, interacts with ARRB2. Interacts with PTPN6; the interaction is enhanced by ARRB2. Interacts with PTPN11; the interaction is enhanced by ARRB2. In terms of tissue distribution, expressed by NK cells.

The protein localises to the cell membrane. Receptor on natural killer (NK) cells for some HLA-C alleles such as w4 and w6. Inhibits the activity of NK cells thus preventing cell lysis. The polypeptide is Killer cell immunoglobulin-like receptor 2DL1 (Homo sapiens (Human)).